The chain runs to 509 residues: Metal transporter Nramp3 (509 aa).

A compositionally biased stretch (low complexity) spans 1-12 (MPQLENNEPLLI). Residues 1 to 25 (MPQLENNEPLLINEEEEEETAYDET) form a disordered region. A compositionally biased stretch (acidic residues) spans 13-23 (NEEEEEETAYD). The next 12 helical transmembrane spans lie at 56 to 76 (LWLF…PGNL), 84 to 104 (AVAG…GLLV), 133 to 153 (MVLW…EVIG), 165 to 185 (ILPL…FLFL), 193 to 213 (LEAV…WMFG), 239 to 259 (AVGV…SALV), 285 to 305 (IALF…AKGF), 327 to 347 (YGGG…AAGQ), 383 to 403 (IIPT…LDVL), 406 to 426 (WLNV…LCLV), 444 to 464 (IAWL…LEFF), and 472 to 492 (VYTG…LYLI).

Belongs to the NRAMP (TC 2.A.55) family. As to expression, expressed in vascular tissues.

Its subcellular location is the vacuole membrane. In terms of biological role, vacuolar metal transporter involved in intracellular metal homeostasis. Can transport iron (Fe), manganese (Mn) and cadmium (Cd). Regulates metal accumulation under Fe starvation. Acts redundantly with NRAMP4 to mobilize vacuolar Fe and provide sufficient Fe during seed germination. In association with NRAMP4, required for optimal growth and photosynthesis under Mn deficiency. Exports Mn from vacuoles in leaf mesophyll cells, making Mn available for functional photosystem II in chloroplasts. Involved in basal resistance to the bacterial pathogen E.chrysanthemi. The protein is Metal transporter Nramp3 (NRAMP3) of Arabidopsis thaliana (Mouse-ear cress).